A 661-amino-acid polypeptide reads, in one-letter code: Peroxisomal acyl-coenzyme A oxidase 1 (661 aa).

Ser-26 is modified (phosphoserine). An N6-acetyllysine modification is found at Lys-65. N6-succinyllysine occurs at positions 89 and 90. Thr-139 serves as a coordination point for FAD. Lys-159 carries the post-translational modification N6-succinyllysine. Gly-178 provides a ligand contact to FAD. Lys-216 carries the N6-acetyllysine modification. Lys-241 carries the post-translational modification N6-succinyllysine. Lys-255, Lys-267, and Lys-272 each carry N6-acetyllysine. Lys-349 is subject to N6-succinyllysine. Glu-421 functions as the Proton acceptor in the catalytic mechanism. N6-acetyllysine; alternate is present on residues Lys-437 and Lys-446. An N6-succinyllysine; alternate mark is found at Lys-437 and Lys-446. Lys-500 carries the post-translational modification N6-acetyllysine. Lys-512 bears the N6-acetyllysine; alternate mark. Lys-512 carries the post-translational modification N6-succinyllysine; alternate. Residue Lys-542 is modified to N6-succinyllysine. Residue Lys-637 is modified to N6-acetyllysine; alternate. Lys-637 is modified (N6-succinyllysine; alternate). The residue at position 643 (Lys-643) is an N6-succinyllysine. At Ser-649 the chain carries Phosphoserine. Lys-652 carries the N6-acetyllysine modification. Residue Lys-655 is modified to N6-succinyllysine. The short motif at 659-661 (SKL) is the Microbody targeting signal element.

It belongs to the acyl-CoA oxidase family. Homodimer. The enzyme contains three components A, B and C, the latter two being produced from the first by a proteolytic cleavage. Interacts with LONP2. The cofactor is FAD. As to expression, expressed in Schwann cells. Expressed (at protein level) in liver.

It localises to the peroxisome. The enzyme catalyses a 2,3-saturated acyl-CoA + O2 = a (2E)-enoyl-CoA + H2O2. It carries out the reaction hexadecanoyl-CoA + O2 = (2E)-hexadecenoyl-CoA + H2O2. It catalyses the reaction dodecanoyl-CoA + O2 = (2E)-dodecenoyl-CoA + H2O2. The catalysed reaction is octanoyl-CoA + O2 = (2E)-octenoyl-CoA + H2O2. The enzyme catalyses decanoyl-CoA + O2 = (2E)-decenoyl-CoA + H2O2. It carries out the reaction tetradecanoyl-CoA + O2 = (2E)-tetradecenoyl-CoA + H2O2. It catalyses the reaction hexadecanedioyl-CoA + O2 = (2E)-hexadecenedioyl-CoA + H2O2. The catalysed reaction is tetracosanoyl-CoA + O2 = (2E)-tetracosenoyl-CoA + H2O2. The enzyme catalyses glutaryl-CoA + O2 = (2E)-glutaconyl-CoA + H2O2. It carries out the reaction hexanoyl-CoA + O2 = (2E)-hexenoyl-CoA + H2O2. It catalyses the reaction octadecanoyl-CoA + O2 = (2E)-octadecenoyl-CoA + H2O2. The catalysed reaction is (5Z,8Z,11Z,14Z,17Z)-eicosapentaenoyl-CoA + O2 = (2E,5Z,8Z,11Z,14Z,17Z)-icosahexaenoyl-CoA + H2O2. The enzyme catalyses (6Z,9Z,12Z,15Z,18Z,21Z)-tetracosahexaenoyl-CoA + O2 = (2E,6Z,9Z,12Z,15Z,18Z,21Z)-tetracosaheptaenoyl-CoA + H2O2. Its pathway is lipid metabolism; peroxisomal fatty acid beta-oxidation. Functionally, involved in the initial and rate-limiting step of peroxisomal beta-oxidation of straight-chain saturated and unsaturated very-long-chain fatty acids. Catalyzes the desaturation of fatty acyl-CoAs such as palmitoyl-CoA (hexadecanoyl-CoA) to 2-trans-enoyl-CoAs ((2E)-enoyl-CoAs) such as (2E)-hexadecenoyl-CoA, and donates electrons directly to molecular oxygen (O(2)), thereby producing hydrogen peroxide (H(2)O(2)). Shows highest activity against medium-chain fatty acyl-CoAs. Shows optimum activity with a chain length of 10 carbons (decanoyl-CoA) in vitro. Its function is as follows. Is active against a much broader range of substrates and shows activity towards long-chain acyl-CoAs. This Rattus norvegicus (Rat) protein is Peroxisomal acyl-coenzyme A oxidase 1.